A 1733-amino-acid chain; its full sequence is ATP-binding cassette sub-family A member 17 (1733 aa).

7 consecutive transmembrane segments (helical) span residues 22–42 (TLITLLEMLMPLLFCAIVLYL), 262–282 (FPLLLMLSFICVELIITNSVL), 306–326 (AWFITFFISVSITVSVMTVLF), 342–362 (TLIFIFLMCFAIATIFFAFMM), 372–392 (GTVIGGTVFFFTYLPYMYITF), 403–423 (ILSCLFSNVAMATGVRFISLF), and 444–464 (FAQVLGMLLLDSFLYCLIAFL). The region spanning 519–752 (IEIQHLYKVF…YGAGYYMTII (234 aa)) is the ABC transporter 1 domain. 555-562 (GHNGAGKT) is a binding site for ATP. N609 carries an N-linked (GlcNAc...) asparagine glycan. The next 7 helical transmembrane spans lie at 906-926 (LVLSVQVLLPLAIIMLSLTFF), 1082-1102 (LVVNFLFGIAFLSSSFSILTV), 1128-1148 (LLWDLISFLVPTLLLVLVFLW), 1160-1180 (IPAVVLIMMLYGWAVIPLVYT), 1192-1212 (CVKLVVMLTFLSISPVVLVTV), 1230-1250 (IFLILPGHCLGMALSNLYYNF), and 1287-1307 (IGKYLTALAVLGPVYITMLFL). The ABC transporter 2 domain occupies 1366-1599 (LVVKEVSKVY…FGISYSLQAK (234 aa)). 1401-1408 (GLNGAGKT) is an ATP binding site. The segment covering 1681–1692 (ESSTKEQIQQEQ) has biased composition (polar residues). The tract at residues 1681-1733 (ESSTKEQIQQEQAVLASPSPPSNSRPISSPPSRLSSPTPKPLPSPPPSEPILL) is disordered. Positions 1704–1717 (SRPISSPPSRLSSP) are enriched in low complexity. Over residues 1718-1733 (TPKPLPSPPPSEPILL) the composition is skewed to pro residues.

This sequence belongs to the ABC transporter superfamily. ABCA family. In terms of processing, N-glycosylated. As to expression, in the testis, detected predominantly in elongated spermatids at the late stage of germ cell development and in sperm, with no expression detected in immature germ cells such as spermatogonia and spermatocytes or in somatic cells such as Sertoli cells (at protein level). Expressed in the head and tail midpiece of elongated spermatids and sperm (at protein level). Expressed exclusively in the testis.

The protein resides in the endoplasmic reticulum membrane. Its subcellular location is the cytoplasm. The catalysed reaction is cholesterol(in) + ATP + H2O = cholesterol(out) + ADP + phosphate + H(+). Functionally, promotes cholesterol efflux from sperm which renders sperm capable of fertilization. Has also been shown to decrease levels of intracellular esterified neutral lipids including cholesteryl esters, fatty acid esters and triacylglycerols. This is ATP-binding cassette sub-family A member 17 from Mus musculus (Mouse).